Consider the following 400-residue polypeptide: S-adenosylmethionine sensor upstream of mTORC1 (400 aa).

Residues arginine 99, glycine 168, aspartate 186, aspartate 198, phenylalanine 199, and serine 240 each coordinate S-adenosyl-L-methionine.

This sequence belongs to the BMT2/SAMTOR family. Interacts with the GATOR1 complex; interaction is disrupted when samtor binds S-adenosyl-L-methionine. Interacts with the KICSTOR complex; interaction is disrupted when samtor binds S-adenosyl-L-methionine.

In terms of biological role, S-adenosyl-L-methionine-binding protein that acts as an inhibitor of mTORC1 signaling via interaction with the GATOR1 and KICSTOR complexes. Acts as a sensor of S-adenosyl-L-methionine to signal methionine sufficiency to mTORC1: in presence of methionine, binds S-adenosyl-L-methionine, leading to disrupt interaction with the GATOR1 and KICSTOR complexes and promote mTORC1 signaling. Upon methionine starvation, S-adenosyl-L-methionine levels are reduced, thereby promoting the association with GATOR1 and KICSTOR, leading to inhibit mTORC1 signaling. Probably also acts as a S-adenosyl-L-methionine-dependent methyltransferase. This is S-adenosylmethionine sensor upstream of mTORC1 from Xenopus laevis (African clawed frog).